The sequence spans 496 residues: Glycerol kinase (496 aa).

An ADP-binding site is contributed by threonine 12. Residues threonine 12, threonine 13, and serine 14 each coordinate ATP. Threonine 12 is a sn-glycerol 3-phosphate binding site. Arginine 16 is a binding site for ADP. 3 residues coordinate sn-glycerol 3-phosphate: arginine 82, glutamate 83, and tyrosine 134. Glycerol contacts are provided by arginine 82, glutamate 83, and tyrosine 134. A Phosphohistidine; by HPr modification is found at histidine 230. A sn-glycerol 3-phosphate-binding site is contributed by aspartate 244. Glycerol contacts are provided by aspartate 244 and glutamine 245. The ADP site is built by threonine 266 and glycine 309. Residues threonine 266, glycine 309, glutamine 313, and glycine 410 each contribute to the ATP site. Positions 410 and 414 each coordinate ADP.

The protein belongs to the FGGY kinase family. In terms of assembly, homotetramer and homodimer (in equilibrium). The phosphoenolpyruvate-dependent sugar phosphotransferase system (PTS), including enzyme I, and histidine-containing protein (HPr) are required for the phosphorylation, which leads to the activation of the enzyme.

The catalysed reaction is glycerol + ATP = sn-glycerol 3-phosphate + ADP + H(+). Its pathway is polyol metabolism; glycerol degradation via glycerol kinase pathway; sn-glycerol 3-phosphate from glycerol: step 1/1. With respect to regulation, activated by phosphorylation and inhibited by fructose 1,6-bisphosphate (FBP). Key enzyme in the regulation of glycerol uptake and metabolism. Catalyzes the phosphorylation of glycerol to yield sn-glycerol 3-phosphate. In Bacillus cereus (strain Q1), this protein is Glycerol kinase.